A 354-amino-acid polypeptide reads, in one-letter code: 3-dehydroquinate synthase (354 aa).

NAD(+)-binding positions include 100–104, 124–125, K136, K145, and 163–166; these read GATGD, TT, and FLAT. Zn(2+)-binding residues include E178, H242, and H256.

It belongs to the sugar phosphate cyclases superfamily. Dehydroquinate synthase family. Requires Co(2+) as cofactor. The cofactor is Zn(2+). NAD(+) serves as cofactor.

The protein resides in the cytoplasm. It carries out the reaction 7-phospho-2-dehydro-3-deoxy-D-arabino-heptonate = 3-dehydroquinate + phosphate. It functions in the pathway metabolic intermediate biosynthesis; chorismate biosynthesis; chorismate from D-erythrose 4-phosphate and phosphoenolpyruvate: step 2/7. In terms of biological role, catalyzes the conversion of 3-deoxy-D-arabino-heptulosonate 7-phosphate (DAHP) to dehydroquinate (DHQ). The chain is 3-dehydroquinate synthase from Staphylococcus haemolyticus (strain JCSC1435).